The chain runs to 605 residues: Isocitrate dehydrogenase kinase/phosphatase (605 aa).

ATP-binding positions include 327-333 (APGIKGL) and Lys-348. Asp-383 is a catalytic residue.

It belongs to the AceK family.

The protein resides in the cytoplasm. It catalyses the reaction L-seryl-[isocitrate dehydrogenase] + ATP = O-phospho-L-seryl-[isocitrate dehydrogenase] + ADP + H(+). Its function is as follows. Bifunctional enzyme which can phosphorylate or dephosphorylate isocitrate dehydrogenase (IDH) on a specific serine residue. This is a regulatory mechanism which enables bacteria to bypass the Krebs cycle via the glyoxylate shunt in response to the source of carbon. When bacteria are grown on glucose, IDH is fully active and unphosphorylated, but when grown on acetate or ethanol, the activity of IDH declines drastically concomitant with its phosphorylation. The protein is Isocitrate dehydrogenase kinase/phosphatase of Burkholderia multivorans (strain ATCC 17616 / 249).